We begin with the raw amino-acid sequence, 221 residues long: Protein-L-isoaspartate O-methyltransferase (221 aa).

The active site involves Ser57.

This sequence belongs to the methyltransferase superfamily. L-isoaspartyl/D-aspartyl protein methyltransferase family.

The protein resides in the cytoplasm. It carries out the reaction [protein]-L-isoaspartate + S-adenosyl-L-methionine = [protein]-L-isoaspartate alpha-methyl ester + S-adenosyl-L-homocysteine. In terms of biological role, catalyzes the methyl esterification of L-isoaspartyl residues in peptides and proteins that result from spontaneous decomposition of normal L-aspartyl and L-asparaginyl residues. It plays a role in the repair and/or degradation of damaged proteins. In Korarchaeum cryptofilum (strain OPF8), this protein is Protein-L-isoaspartate O-methyltransferase.